Here is a 213-residue protein sequence, read N- to C-terminus: Cysteine dioxygenase (213 aa).

The Fe cation site is built by histidine 100, histidine 102, and histidine 160. The 3'-(S-cysteinyl)-tyrosine (Cys-Tyr) cross-link spans 107–177; the sequence is CVMKVLKGSL…TNFAISLHLY (71 aa).

The protein belongs to the cysteine dioxygenase family. The cofactor is Fe cation. The thioether cross-link between Cys-107 and Tyr-177 plays a structural role through stabilizing the Fe(2+) ion, and prevents the production of highly damaging free hydroxyl radicals by holding the oxygen radical via hydroxyl hydrogen.

The catalysed reaction is L-cysteine + O2 = 3-sulfino-L-alanine + H(+). This Ajellomyces capsulatus (strain G186AR / H82 / ATCC MYA-2454 / RMSCC 2432) (Darling's disease fungus) protein is Cysteine dioxygenase (CDO1).